The sequence spans 487 residues: Malonate-semialdehyde dehydrogenase 2 (487 aa).

NAD(+)-binding residues include phenylalanine 154, lysine 178, glutamate 181, arginine 182, and serine 231. Residue cysteine 286 is the Nucleophile of the active site. Glutamate 386 is an NAD(+) binding site.

The protein belongs to the aldehyde dehydrogenase family. IolA subfamily. As to quaternary structure, homotetramer.

It carries out the reaction 3-oxopropanoate + NAD(+) + CoA + H2O = hydrogencarbonate + acetyl-CoA + NADH + H(+). The enzyme catalyses 2-methyl-3-oxopropanoate + NAD(+) + CoA + H2O = propanoyl-CoA + hydrogencarbonate + NADH + H(+). Its pathway is polyol metabolism; myo-inositol degradation into acetyl-CoA; acetyl-CoA from myo-inositol: step 7/7. Catalyzes the oxidation of malonate semialdehyde (MSA) and methylmalonate semialdehyde (MMSA) into acetyl-CoA and propanoyl-CoA, respectively. Is involved in a myo-inositol catabolic pathway. Bicarbonate, and not CO2, is the end-product of the enzymatic reaction. The chain is Malonate-semialdehyde dehydrogenase 2 from Bacillus anthracis.